The following is a 360-amino-acid chain: 45 kDa calcium-binding protein (360 aa).

The N-terminal stretch at 1–29 is a signal peptide; it reads MVSKQAFLFSLGSLYLSLLFIFLLMDVYA. A glycan (N-linked (GlcNAc...) asparagine) is linked at Asn33. EF-hand domains lie at 96 to 131, 135 to 170, 231 to 266, 276 to 311, and 312 to 347; these read RNRR…KTEE, EAVN…SKGF, MLKF…TVEN, WVRD…MNEY, and NALN…FTGS. Positions 109, 111, 113, 115, 120, 148, 150, 152, 154, 159, 244, 246, 248, 250, 255, 289, 291, 293, 300, 325, 327, 329, and 336 each coordinate Ca(2+).

The protein belongs to the CREC family.

It localises to the golgi apparatus lumen. Its function is as follows. May regulate calcium-dependent activities in the endoplasmic reticulum lumen or post-ER compartment. This chain is 45 kDa calcium-binding protein (sdf4), found in Xenopus laevis (African clawed frog).